A 316-amino-acid polypeptide reads, in one-letter code: Acetaldehyde dehydrogenase (316 aa).

An NAD(+)-binding site is contributed by 11–14 (SGNI). The active-site Acyl-thioester intermediate is the cysteine 131. Residues 162–170 (SAGPGTRAN) and asparagine 289 each bind NAD(+).

The protein belongs to the acetaldehyde dehydrogenase family. As to quaternary structure, interacts with MhpE.

It catalyses the reaction acetaldehyde + NAD(+) + CoA = acetyl-CoA + NADH + H(+). It functions in the pathway aromatic compound metabolism; 3-phenylpropanoate degradation. In terms of biological role, catalyzes the conversion of acetaldehyde to acetyl-CoA, using NAD(+) and coenzyme A. Is the final enzyme in the meta-cleavage pathway for the degradation of aromatic compounds. The protein is Acetaldehyde dehydrogenase of Escherichia coli O157:H7.